A 288-amino-acid chain; its full sequence is 4-diphosphocytidyl-2-C-methyl-D-erythritol kinase (288 aa).

Lys-8 is an active-site residue. 90 to 100 (PVGAGLAGGSS) provides a ligand contact to ATP. Residue Asp-132 is part of the active site.

It belongs to the GHMP kinase family. IspE subfamily.

The enzyme catalyses 4-CDP-2-C-methyl-D-erythritol + ATP = 4-CDP-2-C-methyl-D-erythritol 2-phosphate + ADP + H(+). It functions in the pathway isoprenoid biosynthesis; isopentenyl diphosphate biosynthesis via DXP pathway; isopentenyl diphosphate from 1-deoxy-D-xylulose 5-phosphate: step 3/6. In terms of biological role, catalyzes the phosphorylation of the position 2 hydroxy group of 4-diphosphocytidyl-2C-methyl-D-erythritol. This Chlamydia trachomatis serovar L2b (strain UCH-1/proctitis) protein is 4-diphosphocytidyl-2-C-methyl-D-erythritol kinase.